A 301-amino-acid chain; its full sequence is GTP cyclohydrolase FolE2 (301 aa).

The protein belongs to the GTP cyclohydrolase IV family.

It catalyses the reaction GTP + H2O = 7,8-dihydroneopterin 3'-triphosphate + formate + H(+). The protein operates within cofactor biosynthesis; 7,8-dihydroneopterin triphosphate biosynthesis; 7,8-dihydroneopterin triphosphate from GTP: step 1/1. In terms of biological role, converts GTP to 7,8-dihydroneopterin triphosphate. The chain is GTP cyclohydrolase FolE2 from Pseudomonas putida (strain GB-1).